A 202-amino-acid polypeptide reads, in one-letter code: 3-isopropylmalate dehydratase small subunit (202 aa).

The protein belongs to the LeuD family. LeuD type 1 subfamily. As to quaternary structure, heterodimer of LeuC and LeuD.

It catalyses the reaction (2R,3S)-3-isopropylmalate = (2S)-2-isopropylmalate. Its pathway is amino-acid biosynthesis; L-leucine biosynthesis; L-leucine from 3-methyl-2-oxobutanoate: step 2/4. In terms of biological role, catalyzes the isomerization between 2-isopropylmalate and 3-isopropylmalate, via the formation of 2-isopropylmaleate. This is 3-isopropylmalate dehydratase small subunit from Nocardioides sp. (strain ATCC BAA-499 / JS614).